The following is a 241-amino-acid chain: Uridylate kinase (241 aa).

ATP is bound by residues 10 to 13 (KLSG), G53, and R57. UMP-binding positions include D72 and 133-140 (AGSPYFST). ATP is bound by residues N161, Y167, and D170.

This sequence belongs to the UMP kinase family. In terms of assembly, homohexamer.

The protein resides in the cytoplasm. The enzyme catalyses UMP + ATP = UDP + ADP. The protein operates within pyrimidine metabolism; CTP biosynthesis via de novo pathway; UDP from UMP (UMPK route): step 1/1. Inhibited by UTP. Catalyzes the reversible phosphorylation of UMP to UDP. This is Uridylate kinase from Aster yellows witches'-broom phytoplasma (strain AYWB).